We begin with the raw amino-acid sequence, 618 residues long: Manganese lipoxygenase (618 aa).

The N-terminal stretch at 1-16 is a signal peptide; that stretch reads MRSRILAIVFAARHVA. A compositionally biased stretch (low complexity) spans 36 to 45; that stretch reads SSTTVLPSPT. A disordered region spans residues 36–58; that stretch reads SSTTVLPSPTQYTLPNNDPNQGA. Residues 46 to 58 are compositionally biased toward polar residues; that stretch reads QYTLPNNDPNQGA. One can recognise a Lipoxygenase domain in the interval 47-617; it reads YTLPNNDPNQ…NPAVNPFFLS (571 aa). Residues Asn-60, Asn-91, Asn-106, Asn-116, and Asn-157 are each glycosylated (N-linked (GlcNAc...) asparagine). His-290, His-294, His-478, and Asn-482 together coordinate Mn(2+). The N-linked (GlcNAc...) asparagine glycan is linked to Asn-513. Val-618 serves as a coordination point for Mn(2+).

It belongs to the lipoxygenase family. It depends on Mn(2+) as a cofactor. In terms of processing, N- and O-glycosylated.

The protein localises to the secreted. It carries out the reaction (9Z,12Z)-octadecadienoate + O2 = (11S)-hydroperoxy-(9Z,12Z)-octadecadienoate. It catalyses the reaction (9Z,12Z)-octadecadienoate + O2 = (13R)-hydroperoxy-(9Z,11E)-octadecadienoate. The enzyme catalyses (9Z,12Z,15Z)-octadecatrienoate + O2 = (11S)-hydroperoxy-(9Z,12Z,15Z)-octadecatrienoate. The catalysed reaction is (9Z,12Z,15Z)-octadecatrienoate + O2 = (13R)-hydroperoxy-(9Z,11E,15Z)-octadecatrienoate. Its function is as follows. Lipoxygenase that metabolizes linoleic and alpha-linolenic acids to 11S- and 13R-hydroperoxy fatty acids. At the end of lipoxygenation, the intermediate product 11S-HPODE from linoleic acid is then transformed into 13R-HPODE as the final product. It also acts on alpha-linolenic acid producing 11S-HPOTrE and 13R-HPOTrE with subsequent transformation of 11S-HPOTrE to 13R-HPOTrE as the final product. Gamma-linolenic acid is a poor substrate. Oleate and arachidonate are not substrates. The polypeptide is Manganese lipoxygenase (Gaeumannomyces tritici (Wheat and barley take-all root rot fungus)).